The sequence spans 279 residues: RxLR effector protein Avh331 (279 aa).

Positions 1–20 (MMQWSAILIRTCFSGSGGEA) are cleaved as a signal peptide. A RxLR-dEER motif is present at residues 86 to 106 (RSLRSQATNVDDDANVSIENR). The N-linked (GlcNAc...) asparagine glycan is linked to asparagine 100. Residues 129–147 (ANKLWLMADVDPKSAFKLL) form a W1 motif region. A Y1 motif region spans residues 153–174 (GVRFIDNPKMLQWLKFTKAYLD). The l motif stretch occupies residues 178 to 208 (SGFGETSAHALLYEKIGGPDLSLLLLSLKDA). The tract at residues 222–240 (QFGMWHDARIEPEQLAQTV) is W2 motif. A Y2 motif region spans residues 250–271 (PKNDPKLQVIDDYAKYHRKHRK).

It belongs to the RxLR effector family.

The protein localises to the secreted. The protein resides in the host cell. Its function is as follows. Effector that suppresses the host mitogen-activated protein kinase (MAPK)-based plant defense activated by the Phytophthora elicitor to promote colonization of the Phytophthora pathogen. Neither directly inhibits MAPK kinase activity nor interacts with MAPK proteins but acts downstream by suppressing transcriptional activation of resistance marker genes such as FRK1, WRKY22 and WRKY29. Confers avirulence in the presence of resistance protein Rps1k in host. In Phytophthora sojae (strain P6497) (Soybean stem and root rot agent), this protein is RxLR effector protein Avh331.